We begin with the raw amino-acid sequence, 497 residues long: tRNA-2-methylthio-N(6)-dimethylallyladenosine synthase (497 aa).

The segment at 1-48 (MTGTSNIPTHGKEHKDAPALLPLPAPNTHHTHAAHPGDPSHDRHPSRG) is disordered. Over residues 18 to 28 (PALLPLPAPNT) the composition is skewed to low complexity. An MTTase N-terminal domain is found at 48 to 165 (GKLFIKTHGC…LPDMIRARRE (118 aa)). Residues Cys57, Cys94, Cys128, Cys202, Cys206, and Cys209 each contribute to the [4Fe-4S] cluster site. The Radical SAM core domain occupies 188–430 (RAEGPSAFVS…QKHINAYAAD (243 aa)). Positions 433-496 (KRMIGTVQTV…TNSLRGRVHT (64 aa)) constitute a TRAM domain.

This sequence belongs to the methylthiotransferase family. MiaB subfamily. Monomer. Requires [4Fe-4S] cluster as cofactor.

It is found in the cytoplasm. The enzyme catalyses N(6)-dimethylallyladenosine(37) in tRNA + (sulfur carrier)-SH + AH2 + 2 S-adenosyl-L-methionine = 2-methylsulfanyl-N(6)-dimethylallyladenosine(37) in tRNA + (sulfur carrier)-H + 5'-deoxyadenosine + L-methionine + A + S-adenosyl-L-homocysteine + 2 H(+). Catalyzes the methylthiolation of N6-(dimethylallyl)adenosine (i(6)A), leading to the formation of 2-methylthio-N6-(dimethylallyl)adenosine (ms(2)i(6)A) at position 37 in tRNAs that read codons beginning with uridine. The chain is tRNA-2-methylthio-N(6)-dimethylallyladenosine synthase from Xylella fastidiosa (strain M23).